Consider the following 302-residue polypeptide: Sulfate adenylyltransferase subunit 2 (302 aa).

The segment at 280–302 is disordered; that stretch reads RQGRVIDHDQAGSMEQKKREGYF.

The protein belongs to the PAPS reductase family. CysD subfamily. As to quaternary structure, heterodimer composed of CysD, the smaller subunit, and CysN.

It catalyses the reaction sulfate + ATP + H(+) = adenosine 5'-phosphosulfate + diphosphate. Its pathway is sulfur metabolism; hydrogen sulfide biosynthesis; sulfite from sulfate: step 1/3. In terms of biological role, with CysN forms the ATP sulfurylase (ATPS) that catalyzes the adenylation of sulfate producing adenosine 5'-phosphosulfate (APS) and diphosphate, the first enzymatic step in sulfur assimilation pathway. APS synthesis involves the formation of a high-energy phosphoric-sulfuric acid anhydride bond driven by GTP hydrolysis by CysN coupled to ATP hydrolysis by CysD. The polypeptide is Sulfate adenylyltransferase subunit 2 (Hahella chejuensis (strain KCTC 2396)).